The chain runs to 386 residues: Alanine racemase (386 aa).

Lys48 functions as the Proton acceptor; specific for D-alanine in the catalytic mechanism. At Lys48 the chain carries N6-(pyridoxal phosphate)lysine. A substrate-binding site is contributed by Arg149. Tyr278 functions as the Proton acceptor; specific for L-alanine in the catalytic mechanism. Position 326 (Met326) interacts with substrate.

Belongs to the alanine racemase family. It depends on pyridoxal 5'-phosphate as a cofactor.

It carries out the reaction L-alanine = D-alanine. It functions in the pathway amino-acid biosynthesis; D-alanine biosynthesis; D-alanine from L-alanine: step 1/1. In terms of biological role, catalyzes the interconversion of L-alanine and D-alanine. May also act on other amino acids. The protein is Alanine racemase (alr) of Nostoc sp. (strain PCC 7120 / SAG 25.82 / UTEX 2576).